The sequence spans 545 residues: CTP synthase (545 aa).

Residues 1–266 (MATNYIFVTG…DTFVCDRFRL (266 aa)) form an amidoligase domain region. Ser-14 contacts CTP. Ser-14 contacts UTP. Residues 15-20 (SLGKGI) and Asp-72 contribute to the ATP site. Residues Asp-72 and Glu-140 each coordinate Mg(2+). Residues 147-149 (DIE), 187-192 (KTKPTQ), and Lys-223 contribute to the CTP site. UTP-binding positions include 187-192 (KTKPTQ) and Lys-223. Position 239 to 241 (239 to 241 (KDV)) interacts with ATP. Residues 291–542 (TIGMVGKYVE…VKAAKDYQDS (252 aa)) enclose the Glutamine amidotransferase type-1 domain. Residue Gly-352 participates in L-glutamine binding. Cys-379 serves as the catalytic Nucleophile; for glutamine hydrolysis. L-glutamine-binding positions include 380–383 (LGMQ), Glu-403, and Arg-470. Residues His-515 and Glu-517 contribute to the active site.

The protein belongs to the CTP synthase family. Homotetramer.

The enzyme catalyses UTP + L-glutamine + ATP + H2O = CTP + L-glutamate + ADP + phosphate + 2 H(+). It carries out the reaction L-glutamine + H2O = L-glutamate + NH4(+). The catalysed reaction is UTP + NH4(+) + ATP = CTP + ADP + phosphate + 2 H(+). It functions in the pathway pyrimidine metabolism; CTP biosynthesis via de novo pathway; CTP from UDP: step 2/2. Allosterically activated by GTP, when glutamine is the substrate; GTP has no effect on the reaction when ammonia is the substrate. The allosteric effector GTP functions by stabilizing the protein conformation that binds the tetrahedral intermediate(s) formed during glutamine hydrolysis. Inhibited by the product CTP, via allosteric rather than competitive inhibition. Its function is as follows. Catalyzes the ATP-dependent amination of UTP to CTP with either L-glutamine or ammonia as the source of nitrogen. Regulates intracellular CTP levels through interactions with the four ribonucleotide triphosphates. This chain is CTP synthase, found in Actinobacillus pleuropneumoniae serotype 7 (strain AP76).